We begin with the raw amino-acid sequence, 325 residues long: Cell wall mannoprotein PIR3 (325 aa).

The first 18 residues, 1–18, serve as a signal peptide directing secretion; sequence MQYKKPLVVSALAATSLA. Positions 19 to 67 are excised as a propeptide; it reads AYAPKDPWSTLTPSATYKGGITDYSSSFGIAIEAVATSASSVASSKAKR. PIR1/2/3 repeat units follow at residues 68–91, 92–109, 110–127, 128–145, 146–163, 164–181, 182–199, and 200–217; these read AASQIGDGQVQAATTTAAVSKKST, AAAVSQITDGQVQAAKST, AAAASQISDGQVQATTST, KAAASQITDGQIQASKTT, and SGASQVSDGQVQATAEVK.

Belongs to the PIR protein family. Covalently linked to beta-1,3-glucan of the inner cell wall layer via an alkali-sensitive ester linkage between the gamma-carboxyl group of glutamic acids, arising from specific glutamines within the PIR1/2/3 repeats, and hydroxyl groups of glucoses of beta-1,3-glucan chains. Post-translationally, O-glycosylated. Extensively O-mannosylated.

Its subcellular location is the secreted. The protein resides in the cell wall. Component of the outer cell wall layer. Required for stability of the cell wall and for optimal growth. Required for resistance against several antifungal and cell wall-perturbing agents. The protein is Cell wall mannoprotein PIR3 (PIR3) of Saccharomyces cerevisiae (strain ATCC 204508 / S288c) (Baker's yeast).